A 442-amino-acid polypeptide reads, in one-letter code: Kelch domain-containing protein 10 (442 aa).

Positions 1–58 are disordered; sequence MSAAQGWDRNRRRGGGAAGGGGGGSGAGGGSGGNGGRGTGQLNRFVQLSGRPHLPGKK. R13 carries the post-translational modification Omega-N-methylarginine. Residues 15–39 show a composition bias toward gly residues; that stretch reads GGAAGGGGGGSGAGGGSGGNGGRGT. Kelch repeat units lie at residues 87–154, 155–198, 199–260, 261–319, 320–364, and 365–403; these read RPPP…PREL, ASMS…ALLS, CRGK…PEER, YRHE…RRCH, SCVQ…PEPV, and YFHC…LVVP. The segment at 401-442 is interaction with CUL2; it reads VVPSLLELAWEKLLAAFPNLANLSRTQLLHLGLTQGLIERLK.

The protein belongs to the KLHDC10 family. In terms of assembly, component of a CRL2 E3 ubiquitin-protein ligase complex, also named ECS (Elongin BC-CUL2/5-SOCS-box protein) complex, composed of CUL2, Elongin BC (ELOB and ELOC), RBX1 and substrate-specific adapter KLHDC10. Interacts (via the 6 Kelch repeats) with PPP5C.

Its subcellular location is the nucleus. It is found in the cytoplasm. It functions in the pathway protein modification; protein ubiquitination. Substrate-recognition component of a Cul2-RING (CRL2) E3 ubiquitin-protein ligase complex of the DesCEND (destruction via C-end degrons) pathway, which recognizes a C-degron located at the extreme C-terminus of target proteins, leading to their ubiquitination and degradation. The C-degron recognized by the DesCEND pathway is usually a motif of less than ten residues and can be present in full-length proteins, truncated proteins or proteolytically cleaved forms. The CRL2(KLHDC10) complex specifically recognizes proteins with a proline-glycine (Pro-Gly) or an alanine tail (CAT tail) at the C-terminus, leading to their ubiquitination and degradation. The CRL2(KLHDC10) complex is involved in the ribosome-associated quality control (RQC) pathway, which mediates the extraction of incompletely synthesized nascent chains from stalled ribosomes: CRL2(KLHDC10) acts downstream of NEMF and recognizes CAT tails associated with stalled nascent chains, leading to their ubiquitination and degradation. Participates in the oxidative stress-induced cell death through MAP3K5 activation. Inhibits PPP5C phosphatase activity on MAP3K5. Acts as a regulator of necroptosis. In Bos taurus (Bovine), this protein is Kelch domain-containing protein 10 (KLHDC10).